Reading from the N-terminus, the 453-residue chain is Potassium/proton antiporter CemA (453 aa).

4 helical membrane-spanning segments follow: residues 235–255 (YMAC…IIFL), 328–348 (ICTI…ACLL), 378–398 (ILLL…EIII), and 414–434 (VSCF…YWIF).

The protein belongs to the CemA family.

Its subcellular location is the plastid. The protein localises to the chloroplast inner membrane. The enzyme catalyses K(+)(in) + H(+)(out) = K(+)(out) + H(+)(in). Contributes to K(+)/H(+) antiport activity by supporting proton efflux to control proton extrusion and homeostasis in chloroplasts in a light-dependent manner to modulate photosynthesis. Prevents excessive induction of non-photochemical quenching (NPQ) under continuous-light conditions. Indirectly promotes efficient inorganic carbon uptake into chloroplasts. In Zygnema circumcarinatum (Green alga), this protein is Potassium/proton antiporter CemA.